Reading from the N-terminus, the 159-residue chain is E3 ubiquitin ligase complex SCF subunit sconC (159 aa).

The segment at 101 to 159 is interaction with the F-box domain of F-box proteins; the sequence is ILAANYLDIKALLDVGCKTVANMIKGKSPEEIRKTFNIQNDFTPEEEDQIRRENEWAEE.

The protein belongs to the SKP1 family. As to quaternary structure, component of the SCF (SKP1-CUL1-F-box protein) E3 ubiquitin ligase complexes.

The protein operates within protein modification; protein ubiquitination. Functionally, essential component of the SCF (SKP1-CUL1-F-box protein) E3 ubiquitin ligase complexes, which mediate the ubiquitination and subsequent proteasomal degradation of target proteins. Controls sulfur metabolite repression, probably by mediating the inactivation or degradation of the metR transcription factor. This chain is E3 ubiquitin ligase complex SCF subunit sconC (sconC), found in Aspergillus clavatus (strain ATCC 1007 / CBS 513.65 / DSM 816 / NCTC 3887 / NRRL 1 / QM 1276 / 107).